Reading from the N-terminus, the 176-residue chain is Cytochrome b (176 aa).

3 helical membrane-spanning segments follow: residues 33 to 53, 77 to 98, and 113 to 133; these read FGSL…FLAM, WLLR…YLHI, and WNVG…GYVL. 2 residues coordinate heme b: His-83 and His-97.

Belongs to the cytochrome b family. As to quaternary structure, the cytochrome bc1 complex contains 11 subunits: 3 respiratory subunits (MT-CYB, CYC1 and UQCRFS1), 2 core proteins (UQCRC1 and UQCRC2) and 6 low-molecular weight proteins (UQCRH/QCR6, UQCRB/QCR7, UQCRQ/QCR8, UQCR10/QCR9, UQCR11/QCR10 and a cleavage product of UQCRFS1). This cytochrome bc1 complex then forms a dimer. The cofactor is heme b.

The protein resides in the mitochondrion inner membrane. In terms of biological role, component of the ubiquinol-cytochrome c reductase complex (complex III or cytochrome b-c1 complex) that is part of the mitochondrial respiratory chain. The b-c1 complex mediates electron transfer from ubiquinol to cytochrome c. Contributes to the generation of a proton gradient across the mitochondrial membrane that is then used for ATP synthesis. The polypeptide is Cytochrome b (MT-CYB) (Eumops glaucinus (Wagner's mastiff bat)).